The sequence spans 225 residues: MNSIEFPLLDRITQNSVISTTSNDLSNWSRLSSLWPLLYGTSCCFIEFASLIGSRFDFDRYGLVPRSSPRQADLILTAGTVTMKMAPSLVRLYEQMPEPKYVIAMGACTITGGMFSTDSYSTVRGVDKLIPVDVYLPGCPPKPEAVIDAITKLRKKVSREIYEDRTGSQQETRCFTTNHKFRVGRSIHTGNYNQGLLYQSPSTSETPSETFFKYKSSVSPHELVN.

The [4Fe-4S] cluster site is built by cysteine 43, cysteine 44, cysteine 108, and cysteine 139.

This sequence belongs to the complex I 20 kDa subunit family. NDH is composed of at least 16 different subunits, 5 of which are encoded in the nucleus. It depends on [4Fe-4S] cluster as a cofactor.

The protein resides in the plastid. The protein localises to the chloroplast thylakoid membrane. The enzyme catalyses a plastoquinone + NADH + (n+1) H(+)(in) = a plastoquinol + NAD(+) + n H(+)(out). The catalysed reaction is a plastoquinone + NADPH + (n+1) H(+)(in) = a plastoquinol + NADP(+) + n H(+)(out). NDH shuttles electrons from NAD(P)H:plastoquinone, via FMN and iron-sulfur (Fe-S) centers, to quinones in the photosynthetic chain and possibly in a chloroplast respiratory chain. The immediate electron acceptor for the enzyme in this species is believed to be plastoquinone. Couples the redox reaction to proton translocation, and thus conserves the redox energy in a proton gradient. The polypeptide is NAD(P)H-quinone oxidoreductase subunit K, chloroplastic (Nandina domestica (Heavenly bamboo)).